The following is a 180-amino-acid chain: Crossover junction endodeoxyribonuclease RuvC (180 aa).

Residues D13, E73, and D145 contribute to the active site. The Mg(2+) site is built by D13, E73, and D145.

Belongs to the RuvC family. Homodimer which binds Holliday junction (HJ) DNA. The HJ becomes 2-fold symmetrical on binding to RuvC with unstacked arms; it has a different conformation from HJ DNA in complex with RuvA. In the full resolvosome a probable DNA-RuvA(4)-RuvB(12)-RuvC(2) complex forms which resolves the HJ. The cofactor is Mg(2+).

The protein resides in the cytoplasm. It carries out the reaction Endonucleolytic cleavage at a junction such as a reciprocal single-stranded crossover between two homologous DNA duplexes (Holliday junction).. Its function is as follows. The RuvA-RuvB-RuvC complex processes Holliday junction (HJ) DNA during genetic recombination and DNA repair. Endonuclease that resolves HJ intermediates. Cleaves cruciform DNA by making single-stranded nicks across the HJ at symmetrical positions within the homologous arms, yielding a 5'-phosphate and a 3'-hydroxyl group; requires a central core of homology in the junction. The consensus cleavage sequence is 5'-(A/T)TT(C/G)-3'. Cleavage occurs on the 3'-side of the TT dinucleotide at the point of strand exchange. HJ branch migration catalyzed by RuvA-RuvB allows RuvC to scan DNA until it finds its consensus sequence, where it cleaves and resolves the cruciform DNA. This is Crossover junction endodeoxyribonuclease RuvC from Magnetococcus marinus (strain ATCC BAA-1437 / JCM 17883 / MC-1).